The following is a 412-amino-acid chain: UPF0761 membrane protein lpg0643 (412 aa).

6 helical membrane-spanning segments follow: residues 36-56 (ALAF…LAIF), 99-119 (LSIW…FTIE), 137-157 (AFLL…LSLA), 177-197 (ILHY…YVVV), 210-230 (GGLV…YYLI), and 241-261 (AFAT…ITLL).

Belongs to the UPF0761 family.

It localises to the cell inner membrane. This chain is UPF0761 membrane protein lpg0643, found in Legionella pneumophila subsp. pneumophila (strain Philadelphia 1 / ATCC 33152 / DSM 7513).